The following is a 216-amino-acid chain: MSAKLISVTKPVVEGVNTAEELIAYAARVSNPENQINNKTASGLLKYCIRHKHWSIFETAFMTLELKTSRGIAAQVLRHRSFHFQEFSQRYASVMETPPPHQARFQDHKNRQNSLDTVPEDDQTWWATEQEKLYAQSMELYNKALEKGIAKECARFILPLSTPTTIYMSGTIRDWIHYIELRTSNGTQREHIDLANACKEIFIKEFPSIAKALDWV.

A ThyX domain is found at 1–216 (MSAKLISVTK…PSIAKALDWV (216 aa)). Residues Ser-55, 78-80 (RHR), and Glu-86 contribute to the FAD site. Residues 75–78 (QVLR), 86–90 (EFSQR), and Arg-155 contribute to the dUMP site. The ThyX motif motif lies at 78-88 (RHRSFHFQEFS). His-177 is a binding site for FAD. DUMP is bound at residue Arg-182. The active-site Involved in ionization of N3 of dUMP, leading to its activation is the Arg-182.

It belongs to the thymidylate synthase ThyX family. As to quaternary structure, homotetramer. The cofactor is FAD.

The catalysed reaction is dUMP + (6R)-5,10-methylene-5,6,7,8-tetrahydrofolate + NADPH + H(+) = dTMP + (6S)-5,6,7,8-tetrahydrofolate + NADP(+). It functions in the pathway pyrimidine metabolism; dTTP biosynthesis. Its function is as follows. Catalyzes the reductive methylation of 2'-deoxyuridine-5'-monophosphate (dUMP) to 2'-deoxythymidine-5'-monophosphate (dTMP) while utilizing 5,10-methylenetetrahydrofolate (mTHF) as the methyl donor, and NADPH and FADH(2) as the reductant. This Paramecium bursaria Chlorella virus 1 (PBCV-1) protein is Probable flavin-dependent thymidylate synthase.